The following is a 131-amino-acid chain: Profilin-8 (131 aa).

Residues cysteine 13 and cysteine 115 are joined by a disulfide bond. The Involved in PIP2 interaction motif lies at 81–97; the sequence is AVIRGKKGSGGITVKKT. A Phosphothreonine modification is found at threonine 111.

It belongs to the profilin family. Occurs in many kinds of cells as a complex with monomeric actin in a 1:1 ratio. Phosphorylated by MAP kinases.

It is found in the cytoplasm. It localises to the cytoskeleton. Its function is as follows. Binds to actin and affects the structure of the cytoskeleton. At high concentrations, profilin prevents the polymerization of actin, whereas it enhances it at low concentrations. This is Profilin-8 from Zea mays (Maize).